We begin with the raw amino-acid sequence, 431 residues long: Adenylosuccinate lyase (431 aa).

N(6)-(1,2-dicarboxyethyl)-AMP is bound by residues 4 to 5 (RY), 67 to 69 (RHD), and 93 to 94 (TS). His-141 (proton donor/acceptor) is an active-site residue. Gln-212 is a binding site for N(6)-(1,2-dicarboxyethyl)-AMP. The active-site Proton donor/acceptor is the Ser-262. Residues Ser-263, 268 to 270 (KRN), Asn-276, and 307 to 311 (SAERI) contribute to the N(6)-(1,2-dicarboxyethyl)-AMP site.

This sequence belongs to the lyase 1 family. Adenylosuccinate lyase subfamily. In terms of assembly, homodimer and homotetramer. Residues from neighboring subunits contribute catalytic and substrate-binding residues to each active site.

It catalyses the reaction N(6)-(1,2-dicarboxyethyl)-AMP = fumarate + AMP. The enzyme catalyses (2S)-2-[5-amino-1-(5-phospho-beta-D-ribosyl)imidazole-4-carboxamido]succinate = 5-amino-1-(5-phospho-beta-D-ribosyl)imidazole-4-carboxamide + fumarate. It functions in the pathway purine metabolism; AMP biosynthesis via de novo pathway; AMP from IMP: step 2/2. The protein operates within purine metabolism; IMP biosynthesis via de novo pathway; 5-amino-1-(5-phospho-D-ribosyl)imidazole-4-carboxamide from 5-amino-1-(5-phospho-D-ribosyl)imidazole-4-carboxylate: step 2/2. Functionally, catalyzes two reactions in de novo purine nucleotide biosynthesis. Catalyzes the breakdown of 5-aminoimidazole- (N-succinylocarboxamide) ribotide (SAICAR or 2-[5-amino-1-(5-phospho-beta-D-ribosyl)imidazole-4-carboxamido]succinate) to 5-aminoimidazole-4-carboxamide ribotide (AICAR or 5-amino-1-(5-phospho-beta-D-ribosyl)imidazole-4-carboxamide) and fumarate, and of adenylosuccinate (ADS or N(6)-(1,2-dicarboxyethyl)-AMP) to adenosine monophosphate (AMP) and fumarate. The protein is Adenylosuccinate lyase (purB) of Staphylococcus aureus (strain USA300).